The following is a 72-amino-acid chain: Caerin-regulated peptide (72 aa).

Positions 1-22 are cleaved as a signal peptide; the sequence is MAFLKKSLLLVLFLGLVSLSIC. Positions 23-43 are excised as a propeptide; sequence DEEKRENEDEEEQEDDEQSEE. Residues 24–46 are disordered; that stretch reads EEKRENEDEEEQEDDEQSEEKRG. Residues 30–41 are compositionally biased toward acidic residues; that stretch reads EDEEEQEDDEQS.

In terms of tissue distribution, expressed by the skin glands.

The protein resides in the secreted. Has antibacterial activity against Gram-positive bacterium M.luteus NCT C2665 and against Gram-negative bacterium E.coli K12D31. In Agalychnis callidryas (Red-eyed tree frog), this protein is Caerin-regulated peptide.